Here is a 1072-residue protein sequence, read N- to C-terminus: LRR receptor-like serine/threonine-protein kinase RGI5 (1072 aa).

The first 21 residues, 1 to 21, serve as a signal peptide directing secretion; sequence MERERSNFFFLFLFCSWVSMA. Residues 22–706 lie on the Extracellular side of the membrane; that stretch reads QPTLSLSSDG…NGVKSPKIVA (685 aa). Cys56 and Cys63 form a disulfide bridge. 25 LRR repeats span residues 66–89, 90–113, 114–138, 140–162, 164–185, 187–211, 212–234, 235–259, 260–283, 285–307, 308–331, 332–355, 356–379, 381–402, 403–427, 429–451, 452–475, 477–499, 500–523, 524–546, 548–571, 572–595, 597–619, 620–642, and 643–667; these read DNRV…DLSS, LSSL…SFGK, LTHL…LGRL, TLQF…ISNL, ALQV…SFGS, VSLQ…LGFL, KNLT…TFGN, LVNL…LGLC, SELR…LGKL, KITS…ISNC, SSLV…LGKL, VWLE…LSNC, SSLI…IGNL, SLQS…SFGN, CTDL…LFSL, RLSK…VAKC, QSLV…IGEL, NLVF…ISNI, TVLE…LGNL, VNLE…SFGN, SYLN…IKNL, QKLT…LGQV, SLTI…TFSD, LTQL…VLGS, and LTSL…PFFK. N-linked (GlcNAc...) asparagine glycans are attached at residues Asn80, Asn97, and Asn102. The Small peptide recognition motif lies at 171–172; that stretch reads QD. N-linked (GlcNAc...) asparagine glycosylation is present at Asn176. A Small peptide recognition motif is present at residues 193-196; sequence RLGG. Asn213 carries an N-linked (GlcNAc...) asparagine glycan. Short sequence motifs (small peptide recognition) lie at residues 216 to 221, Tyr244, and 266 to 268; these read TLGFAA and YLH. Residue Asn306 is glycosylated (N-linked (GlcNAc...) asparagine). 2 short sequence motifs (small peptide recognition) span residues 314–317 and 336–338; these read DVSA and QLQ. An N-linked (GlcNAc...) asparagine glycan is attached at Asn354. The Small peptide recognition motif lies at 384–388; that stretch reads SFFLW. Residue Asn402 is glycosylated (N-linked (GlcNAc...) asparagine). Short sequence motifs (small peptide recognition) lie at residues 410–413, 432–436, and 456–458; these read DLSR, KLLLL, and RLR. Asn498 is a glycosylation site (N-linked (GlcNAc...) asparagine). N-linked (GlcNAc...) asparagine glycosylation is present at Asn546. Asn650 and Asn655 each carry an N-linked (GlcNAc...) asparagine glycan. The helical transmembrane segment at 707 to 727 threads the bilayer; the sequence is LTAVILASITIAILAAWLLIL. The Cytoplasmic portion of the chain corresponds to 728–1072; the sequence is RNNHLYKTSQ…SQPLIKPSSS (345 aa). A Phosphothreonine modification is found at Thr764. The Protein kinase domain occupies 772–1067; sequence LTDENVIGKG…EWGKTSQPLI (296 aa). ATP-binding positions include 778–786 and Lys800; that span reads IGKGCSGIV. 2 positions are modified to phosphotyrosine: Tyr851 and Tyr887. The Proton acceptor role is filled by Asp900. Ser936 carries the phosphoserine modification. Phosphotyrosine is present on residues Tyr944 and Tyr951. Phosphothreonine is present on Thr952.

Belongs to the protein kinase superfamily. Ser/Thr protein kinase family. In terms of assembly, binds to RGF1; this interaction triggers the formation of heterodimers with SERK1. In terms of processing, phosphorylated and ubiquitinated upon interaction with RGF1, thus leading to activation a subsequent degradation. Autophosphorylated. As to expression, expressed in roots and hypocotyls.

The protein localises to the membrane. The enzyme catalyses L-seryl-[protein] + ATP = O-phospho-L-seryl-[protein] + ADP + H(+). The catalysed reaction is L-threonyl-[protein] + ATP = O-phospho-L-threonyl-[protein] + ADP + H(+). Together with RGI1, RGI2, RGI3 and RGI4, acts as a receptor of RGF1, a peptide hormone that maintains the postembryonic root stem cell niche by regulating the expression levels and patterns of the transcription factor PLETHORA (PLT). Links RGF1 signal with its downstream components. The polypeptide is LRR receptor-like serine/threonine-protein kinase RGI5 (Arabidopsis thaliana (Mouse-ear cress)).